We begin with the raw amino-acid sequence, 586 residues long: Major facilitator superfamily domain-containing protein 6-like (586 aa).

Helical transmembrane passes span 50 to 70 and 78 to 98; these read TLMG…AFLA and ALLI…VLVP. A disordered region spans residues 133-160; that stretch reads AQESASSHPAKRTAEVEMPGFRNPPGES. 9 helical membrane passes run 246–266, 287–307, 326–346, 361–381, 400–420, 433–455, 456–476, 499–519, and 521–541; these read FILS…LEQV, LWVW…ALVG, GYSV…IPIC, IVGG…VGAI, ELVM…LHPF, LVGL…WSWW, SVLP…WAVG, FYGS…MRFS, and AVLY…LLSI.

It belongs to the major facilitator superfamily. MFSD6 family.

The protein localises to the membrane. The protein is Major facilitator superfamily domain-containing protein 6-like (MFSD6L) of Homo sapiens (Human).